A 1053-amino-acid chain; its full sequence is Carbamoyl phosphate synthase large chain (1053 aa).

Residues 1-397 (MPKNTSLKKV…GFKKALRSLD (397 aa)) are carboxyphosphate synthetic domain. Residues R127, R167, G173, G174, E206, V208, E213, G239, V240, H241, Q282, and E294 each coordinate ATP. Positions 131–323 (KKLMLEIGEP…IARVAAKVAI (193 aa)) constitute an ATP-grasp 1 domain. Residues Q282, E294, and N296 each coordinate Mg(2+). Mn(2+) is bound by residues Q282, E294, and N296. The tract at residues 398–530 (TDIYRHTDLN…YSTWEQECEL (133 aa)) is oligomerization domain. The interval 531–919 (TQSDRKKILI…YKASQAADNT (389 aa)) is carbamoyl phosphate synthetic domain. The ATP-grasp 2 domain occupies 661-852 (SVLLDQNNIP…LAKIAAKLML (192 aa)). Residues R697, R736, L738, E743, G768, V769, H770, S771, Q811, and E823 each coordinate ATP. Residues Q811, E823, and N825 each contribute to the Mg(2+) site. Mn(2+) contacts are provided by Q811, E823, and N825. Residues 918–1053 (NTIPLKGNVF…TVEPLSHYHS (136 aa)) enclose the MGS-like domain. The segment at 920-1053 (IPLKGNVFIS…TVEPLSHYHS (134 aa)) is allosteric domain.

It belongs to the CarB family. In terms of assembly, composed of two chains; the small (or glutamine) chain promotes the hydrolysis of glutamine to ammonia, which is used by the large (or ammonia) chain to synthesize carbamoyl phosphate. Tetramer of heterodimers (alpha,beta)4. Mg(2+) serves as cofactor. The cofactor is Mn(2+).

It carries out the reaction hydrogencarbonate + L-glutamine + 2 ATP + H2O = carbamoyl phosphate + L-glutamate + 2 ADP + phosphate + 2 H(+). The catalysed reaction is hydrogencarbonate + NH4(+) + 2 ATP = carbamoyl phosphate + 2 ADP + phosphate + 2 H(+). The protein operates within amino-acid biosynthesis; L-arginine biosynthesis; carbamoyl phosphate from bicarbonate: step 1/1. It functions in the pathway pyrimidine metabolism; UMP biosynthesis via de novo pathway; (S)-dihydroorotate from bicarbonate: step 1/3. Large subunit of the glutamine-dependent carbamoyl phosphate synthetase (CPSase). CPSase catalyzes the formation of carbamoyl phosphate from the ammonia moiety of glutamine, carbonate, and phosphate donated by ATP, constituting the first step of 2 biosynthetic pathways, one leading to arginine and/or urea and the other to pyrimidine nucleotides. The large subunit (synthetase) binds the substrates ammonia (free or transferred from glutamine from the small subunit), hydrogencarbonate and ATP and carries out an ATP-coupled ligase reaction, activating hydrogencarbonate by forming carboxy phosphate which reacts with ammonia to form carbamoyl phosphate. The chain is Carbamoyl phosphate synthase large chain from Methanocorpusculum labreanum (strain ATCC 43576 / DSM 4855 / Z).